A 469-amino-acid chain; its full sequence is 6-phosphogluconate dehydrogenase, NADP(+)-dependent, decarboxylating (469 aa).

Residues 10-15, 33-35, 74-76, and asparagine 102 each bind NADP(+); these read GLAVMG, NRS, and VKA. Substrate is bound by residues asparagine 102 and 128–130; that span reads SGG. Residue lysine 182 is the Proton acceptor of the active site. Substrate is bound at residue 185 to 186; it reads HN. Glutamate 189 functions as the Proton donor in the catalytic mechanism. The substrate site is built by tyrosine 190, lysine 260, arginine 287, arginine 446, and histidine 452.

The protein belongs to the 6-phosphogluconate dehydrogenase family. In terms of assembly, homodimer.

It carries out the reaction 6-phospho-D-gluconate + NADP(+) = D-ribulose 5-phosphate + CO2 + NADPH. The protein operates within carbohydrate degradation; pentose phosphate pathway; D-ribulose 5-phosphate from D-glucose 6-phosphate (oxidative stage): step 3/3. Functionally, catalyzes the oxidative decarboxylation of 6-phosphogluconate to ribulose 5-phosphate and CO(2), with concomitant reduction of NADP to NADPH. Is the predominant 6-P-gluconate dehydrogenase isoenzyme in B.subtilis during growth on glucose and gluconate. The chain is 6-phosphogluconate dehydrogenase, NADP(+)-dependent, decarboxylating (gndA) from Bacillus subtilis (strain 168).